Reading from the N-terminus, the 387-residue chain is Succinate--CoA ligase [ADP-forming] subunit beta (387 aa).

An ATP-grasp domain is found at 9–244 (KQLFAEYGIP…KTQEDETEVL (236 aa)). ATP is bound by residues Lys-46, 53–55 (GRG), Gly-102, and Glu-107. Residues Asn-199 and Asp-213 each contribute to the Mg(2+) site. Substrate contacts are provided by residues Asn-264 and 321-323 (GIV).

It belongs to the succinate/malate CoA ligase beta subunit family. In terms of assembly, heterotetramer of two alpha and two beta subunits. Requires Mg(2+) as cofactor.

The enzyme catalyses succinate + ATP + CoA = succinyl-CoA + ADP + phosphate. It catalyses the reaction GTP + succinate + CoA = succinyl-CoA + GDP + phosphate. It functions in the pathway carbohydrate metabolism; tricarboxylic acid cycle; succinate from succinyl-CoA (ligase route): step 1/1. Its function is as follows. Succinyl-CoA synthetase functions in the citric acid cycle (TCA), coupling the hydrolysis of succinyl-CoA to the synthesis of either ATP or GTP and thus represents the only step of substrate-level phosphorylation in the TCA. The beta subunit provides nucleotide specificity of the enzyme and binds the substrate succinate, while the binding sites for coenzyme A and phosphate are found in the alpha subunit. In Xylella fastidiosa (strain M23), this protein is Succinate--CoA ligase [ADP-forming] subunit beta.